The primary structure comprises 625 residues: Acetolactate synthase (625 aa).

Residues 1-29 (MSAPTKPHARPQGAGNSVPNTVKPATQFP) form a disordered region. The segment covering 14 to 29 (AGNSVPNTVKPATQFP) has biased composition (polar residues). E92 serves as a coordination point for thiamine diphosphate. Residues R194, 300 to 321 (HGTV…LGTR), and 343 to 362 (DIDP…IVGD) each bind FAD. The thiamine pyrophosphate binding stretch occupies residues 436–516 (QHQMWAAQFI…IKVALINNGN (81 aa)). Mg(2+)-binding residues include D487 and N514.

This sequence belongs to the TPP enzyme family. Requires Mg(2+) as cofactor. Thiamine diphosphate serves as cofactor.

The enzyme catalyses 2 pyruvate + H(+) = (2S)-2-acetolactate + CO2. The protein operates within amino-acid biosynthesis; L-isoleucine biosynthesis; L-isoleucine from 2-oxobutanoate: step 1/4. Its pathway is amino-acid biosynthesis; L-valine biosynthesis; L-valine from pyruvate: step 1/4. The sequence is that of Acetolactate synthase (ilvB) from Mycobacterium leprae (strain TN).